Reading from the N-terminus, the 308-residue chain is Aspartate carbamoyltransferase catalytic subunit (308 aa).

Residues Arg-57 and Thr-58 each coordinate carbamoyl phosphate. Residue Lys-86 participates in L-aspartate binding. Residues Arg-107, His-135, and Gln-138 each coordinate carbamoyl phosphate. Residues Arg-168 and Arg-228 each coordinate L-aspartate. The carbamoyl phosphate site is built by Leu-267 and Pro-268.

It belongs to the aspartate/ornithine carbamoyltransferase superfamily. ATCase family. In terms of assembly, heterododecamer (2C3:3R2) of six catalytic PyrB chains organized as two trimers (C3), and six regulatory PyrI chains organized as three dimers (R2).

It catalyses the reaction carbamoyl phosphate + L-aspartate = N-carbamoyl-L-aspartate + phosphate + H(+). It functions in the pathway pyrimidine metabolism; UMP biosynthesis via de novo pathway; (S)-dihydroorotate from bicarbonate: step 2/3. Its function is as follows. Catalyzes the condensation of carbamoyl phosphate and aspartate to form carbamoyl aspartate and inorganic phosphate, the committed step in the de novo pyrimidine nucleotide biosynthesis pathway. The chain is Aspartate carbamoyltransferase catalytic subunit from Leptospira borgpetersenii serovar Hardjo-bovis (strain JB197).